A 2200-amino-acid chain; its full sequence is Tyrosine-protein phosphatase Lar-like (2200 aa).

The signal sequence occupies residues 1 to 42 (MIQFRNKNNSMNRIARHLRNVARRKGSSLLLFLMLSTVLVAA). N-linked (GlcNAc...) asparagine glycosylation is found at Asn-8 and Asn-116. Residues 43 to 1497 (KEDDPARLVV…LRGASQKSSP (1455 aa)) are Extracellular-facing. Ig-like C2-type domains follow at residues 47 to 139 (PARL…ASLT), 151 to 240 (PQIE…KAAN), and 250 to 334 (PYFS…TTVI). Disulfide bonds link Cys-69/Cys-122 and Cys-172/Cys-225. Asn-269 and Asn-315 each carry an N-linked (GlcNAc...) asparagine glycan. Residues Cys-272 and Cys-318 are joined by a disulfide bond. Fibronectin type-III domains follow at residues 341–434 (PPVN…TKPS), 439–535 (APVS…TRQG), 539–628 (QPPM…TIAS), 633–748 (SPTI…TLED), 752–856 (APRN…IPPE), 857–956 (APEI…PVGS), 957–1053 (PDGE…PDPA), 1058–1158 (PPTN…NYMT), and 1181–1287 (MVQN…TGPP). Asn-574 is a glycosylation site (N-linked (GlcNAc...) asparagine). Asn-945, Asn-988, Asn-1069, Asn-1141, Asn-1212, and Asn-1330 each carry an N-linked (GlcNAc...) asparagine glycan. Residues 1355–1392 (LARSLSVSPSKKLKRKASEVGDDSQSASYHPKEKRARR) form a disordered region. Residues 1498 to 1518 (WVGACIAFLVLFSIVGMLICW) traverse the membrane as a helical segment. Residues 1519–2200 (WLRCNKKSAG…EYLAAYDNFS (682 aa)) lie on the Cytoplasmic side of the membrane. Tyrosine-protein phosphatase domains lie at 1647–1902 (FQSE…VLDA) and 1933–2192 (IDME…AYEY). Substrate is bound by residues Asp-1811, 1843 to 1849 (CSAGIGR), and Gln-1887. Residue Cys-1843 is the Phosphocysteine intermediate of the active site. Cys-2133 (phosphocysteine intermediate) is an active-site residue.

The protein belongs to the protein-tyrosine phosphatase family. Receptor class 2A subfamily. As to expression, both isoforms are ubiquitously expressed in early embryos. In later embryos, larvae and adults expression is highest in the nerve ring, dorsal cord, ventral cord and epithelial tissues.

The protein localises to the cell junction. The protein resides in the adherens junction. It localises to the cell membrane. It carries out the reaction O-phospho-L-tyrosyl-[protein] + H2O = L-tyrosyl-[protein] + phosphate. Has a role in early neural and epidermal development; neuroblast movements during closure of the gastrulation cleft and epidermal morphogenesis. Vab-1 and ptp-3 may function redundantly within the same sets of neuronal precursors. The chain is Tyrosine-protein phosphatase Lar-like (ptp-3) from Caenorhabditis elegans.